The chain runs to 520 residues: Ubiquitin carboxyl-terminal hydrolase 3 (520 aa).

Methionine 1 carries the N-acetylmethionine modification. The UBP-type zinc-finger motif lies at 1–121 (MECPHLSSSV…QKVREHLQNL (121 aa)). Positions 3, 5, 29, 32, 41, 44, 49, 56, 60, 82, 95, and 98 each coordinate Zn(2+). A USP domain is found at 159-511 (TGLRNLGNTC…KAYILFYVEH (353 aa)). Residue cysteine 168 is the Nucleophile of the active site. Residue histidine 471 is the Proton acceptor of the active site.

It belongs to the peptidase C19 family. USP3 subfamily. As to quaternary structure, interacts (via UBP-type domain) with H2A; the interaction is less efficient than with monoubiquitinated H2A. As to expression, expressed in all tissues examined, with strongest expression in pancreas.

It localises to the nucleus. Its subcellular location is the cytoplasm. The enzyme catalyses Thiol-dependent hydrolysis of ester, thioester, amide, peptide and isopeptide bonds formed by the C-terminal Gly of ubiquitin (a 76-residue protein attached to proteins as an intracellular targeting signal).. In terms of biological role, deubiquitinase that plays a role in several cellular processes including transcriptional regulation, cell cycle progression or innate immunity. In response to DNA damage, deubiquitinates monoubiquitinated target proteins such as histone H2A and H2AX and thereby counteracts RNF168- and RNF8-mediated ubiquitination. In turn, participates in the recruitment of DNA damage repair factors to DNA break sites. Required for proper progression through S phase and subsequent mitotic entry. Acts as a positive regulator of TP53 by deubiquitinating and stabilizing it to promote normal cell proliferation and transformation. Participates in establishing tolerance innate immune memory through non-transcriptional feedback. Mechanistically, negatively regulates TLR-induced NF-kappa-B signaling by targeting and removing the 'Lys-63'-linked polyubiquitin chains on MYD88. Negatively regulates the activation of type I interferon signaling by mediating 'Lys-63'-linked polyubiquitin chains on RIGI and IFIH1. Also deubiquinates ASC/PYCARD, the central adapter mediating the assembly and activation of most inflammasomes, and thereby promotes inflammasome activation. This chain is Ubiquitin carboxyl-terminal hydrolase 3 (USP3), found in Homo sapiens (Human).